Here is a 545-residue protein sequence, read N- to C-terminus: Membrane protein insertase YidC (545 aa).

Residues 6–26 (NILLIGLLFVSFLLWQQWQAD) traverse the membrane as a helical segment. A disordered region spans residues 44–65 (STVADAHSSDVPDADSAVPEAT). A run of 4 helical transmembrane segments spans residues 346–366 (LLMFFQSIVGNWGIAIILITL), 424–444 (GGCLPILLQMPIFIALYWVLL), 461–481 (LSVQDPYYVMPILMGISMFVM), and 504–524 (VIFTVFFLWFPAGLVLYWLVG).

The protein belongs to the OXA1/ALB3/YidC family. Type 1 subfamily. Interacts with the Sec translocase complex via SecD. Specifically interacts with transmembrane segments of nascent integral membrane proteins during membrane integration.

It localises to the cell inner membrane. Its function is as follows. Required for the insertion and/or proper folding and/or complex formation of integral membrane proteins into the membrane. Involved in integration of membrane proteins that insert both dependently and independently of the Sec translocase complex, as well as at least some lipoproteins. Aids folding of multispanning membrane proteins. In Shewanella pealeana (strain ATCC 700345 / ANG-SQ1), this protein is Membrane protein insertase YidC.